We begin with the raw amino-acid sequence, 159 residues long: 2-C-methyl-D-erythritol 2,4-cyclodiphosphate synthase (159 aa).

Residues Asp-8 and His-10 each coordinate a divalent metal cation. 4-CDP-2-C-methyl-D-erythritol 2-phosphate-binding positions include 8–10 and 34–35; these read DVH and HS. Residue His-42 participates in a divalent metal cation binding. Residues 56–58, 100–106, 132–135, Phe-139, and Arg-142 contribute to the 4-CDP-2-C-methyl-D-erythritol 2-phosphate site; these read DIG, AQAPKMA, and TTTE.

The protein belongs to the IspF family. As to quaternary structure, homotrimer. A divalent metal cation serves as cofactor.

It catalyses the reaction 4-CDP-2-C-methyl-D-erythritol 2-phosphate = 2-C-methyl-D-erythritol 2,4-cyclic diphosphate + CMP. The protein operates within isoprenoid biosynthesis; isopentenyl diphosphate biosynthesis via DXP pathway; isopentenyl diphosphate from 1-deoxy-D-xylulose 5-phosphate: step 4/6. Involved in the biosynthesis of isopentenyl diphosphate (IPP) and dimethylallyl diphosphate (DMAPP), two major building blocks of isoprenoid compounds. Catalyzes the conversion of 4-diphosphocytidyl-2-C-methyl-D-erythritol 2-phosphate (CDP-ME2P) to 2-C-methyl-D-erythritol 2,4-cyclodiphosphate (ME-CPP) with a corresponding release of cytidine 5-monophosphate (CMP). This is 2-C-methyl-D-erythritol 2,4-cyclodiphosphate synthase from Marinobacter nauticus (strain ATCC 700491 / DSM 11845 / VT8) (Marinobacter aquaeolei).